The following is a 500-amino-acid chain: NAD(P)H-quinone oxidoreductase chain 4, chloroplastic (500 aa).

14 helical membrane passes run 4–24 (FPWLTIIVVFPISAGSLMLFL), 35–55 (YTICICILELLLTTYTFCYNF), 87–107 (IGTILLTGFITTLAILAAFPV), 113–130 (LFHFLMLAMYSGQIGSFS), 134–154 (LLLFFIMWELELIPVYLLLSM), 167–187 (FILYTAGSSIFLLIGVLGISL), 211–231 (IILYIGFLIAFAVKSPLIPLH), 242–262 (HYSTCMLLAGILLKMGAYGLV), 272–292 (AHSMFSPWLMVVGTIQIIYAA), 305–325 (IAYSSVSHMGFIIIGIASITD), 330–350 (GAILQIISHGFIGAALFFLAG), 386–406 (LALPGMSGFVAEFIVFFGIIT), 416–436 (ILIIFVMAIGMILTPIYLLSM), and 466–486 (ISSLLPIIGMGIYPDFVLALA).

It belongs to the complex I subunit 4 family.

It is found in the plastid. The protein resides in the chloroplast thylakoid membrane. The enzyme catalyses a plastoquinone + NADH + (n+1) H(+)(in) = a plastoquinol + NAD(+) + n H(+)(out). It carries out the reaction a plastoquinone + NADPH + (n+1) H(+)(in) = a plastoquinol + NADP(+) + n H(+)(out). In Aethionema grandiflorum (Persian stone-cress), this protein is NAD(P)H-quinone oxidoreductase chain 4, chloroplastic.